Reading from the N-terminus, the 362-residue chain is Protein OCA4 (362 aa).

Required for replication of Brome mosaic virus (BMV). This chain is Protein OCA4 (OCA4), found in Saccharomyces cerevisiae (strain ATCC 204508 / S288c) (Baker's yeast).